We begin with the raw amino-acid sequence, 90 residues long: Sec-independent protein translocase protein TatA (90 aa).

Residues 1 to 21 form a helical membrane-spanning segment; that stretch reads MGGASIWHWIVVGVIVMLLFG. A disordered region spans residues 42 to 90; it reads GMADEDQPQAPVANQSPPPVSATEPVRTLPPHQGEPAPAANASVDRKVG.

The protein belongs to the TatA/E family. The Tat system comprises two distinct complexes: a TatABC complex, containing multiple copies of TatA, TatB and TatC subunits, and a separate TatA complex, containing only TatA subunits. Substrates initially bind to the TatABC complex, which probably triggers association of the separate TatA complex to form the active translocon.

Its subcellular location is the cell inner membrane. In terms of biological role, part of the twin-arginine translocation (Tat) system that transports large folded proteins containing a characteristic twin-arginine motif in their signal peptide across membranes. TatA could form the protein-conducting channel of the Tat system. The protein is Sec-independent protein translocase protein TatA of Methylobacterium nodulans (strain LMG 21967 / CNCM I-2342 / ORS 2060).